The chain runs to 281 residues: Pantothenate synthetase (281 aa).

30–37 (MGYLHEGH) contacts ATP. H37 serves as the catalytic Proton donor. Residue Q61 participates in (R)-pantoate binding. Q61 lines the beta-alanine pocket. 147-150 (GEKD) lines the ATP pocket. Q153 is a (R)-pantoate binding site. ATP-binding positions include V176 and 184–187 (MSSR).

This sequence belongs to the pantothenate synthetase family. As to quaternary structure, homodimer.

Its subcellular location is the cytoplasm. The enzyme catalyses (R)-pantoate + beta-alanine + ATP = (R)-pantothenate + AMP + diphosphate + H(+). Its pathway is cofactor biosynthesis; (R)-pantothenate biosynthesis; (R)-pantothenate from (R)-pantoate and beta-alanine: step 1/1. Catalyzes the condensation of pantoate with beta-alanine in an ATP-dependent reaction via a pantoyl-adenylate intermediate. This is Pantothenate synthetase from Desulfatibacillum aliphaticivorans.